A 246-amino-acid polypeptide reads, in one-letter code: Probable transcriptional regulatory protein Dshi_2762 (246 aa).

Belongs to the TACO1 family.

The protein localises to the cytoplasm. The polypeptide is Probable transcriptional regulatory protein Dshi_2762 (Dinoroseobacter shibae (strain DSM 16493 / NCIMB 14021 / DFL 12)).